The primary structure comprises 185 residues: Elongation factor P (185 aa).

This sequence belongs to the elongation factor P family.

It is found in the cytoplasm. It participates in protein biosynthesis; polypeptide chain elongation. Involved in peptide bond synthesis. Stimulates efficient translation and peptide-bond synthesis on native or reconstituted 70S ribosomes in vitro. Probably functions indirectly by altering the affinity of the ribosome for aminoacyl-tRNA, thus increasing their reactivity as acceptors for peptidyl transferase. This is Elongation factor P from Paraburkholderia phytofirmans (strain DSM 17436 / LMG 22146 / PsJN) (Burkholderia phytofirmans).